Here is a 333-residue protein sequence, read N- to C-terminus: Phosphate acyltransferase (333 aa).

Belongs to the PlsX family. Homodimer. Probably interacts with PlsY.

Its subcellular location is the cytoplasm. The catalysed reaction is a fatty acyl-[ACP] + phosphate = an acyl phosphate + holo-[ACP]. Its pathway is lipid metabolism; phospholipid metabolism. In terms of biological role, catalyzes the reversible formation of acyl-phosphate (acyl-PO(4)) from acyl-[acyl-carrier-protein] (acyl-ACP). This enzyme utilizes acyl-ACP as fatty acyl donor, but not acyl-CoA. In Clostridium botulinum (strain Alaska E43 / Type E3), this protein is Phosphate acyltransferase.